A 555-amino-acid chain; its full sequence is Dynein regulatory complex protein 11 (555 aa).

IQ domains follow at residues E154–Q183 and H199–E226. 4 disordered regions span residues M232–K255, K299–I377, A450–S469, and A501–A555. Composition is skewed to basic and acidic residues over residues K235–Q244 and G338–G367. Basic residues predominate over residues K452–K464. Positions A501–G521 are enriched in basic and acidic residues. The span at K537–S546 shows a compositional bias: basic residues.

Belongs to the AAA ATPase family. DRC11 subfamily. In terms of assembly, component of the nexin-dynein regulatory complex (N-DRC). Interacts with DRC5.

It is found in the cytoplasm. The protein localises to the cytoskeleton. It localises to the flagellum axoneme. Component of the nexin-dynein regulatory complex (N-DRC), a key regulator of ciliary/flagellar motility which maintains the alignment and integrity of the distal axoneme and regulates microtubule sliding in motile axonemes. This Chlamydomonas reinhardtii (Chlamydomonas smithii) protein is Dynein regulatory complex protein 11.